The chain runs to 203 residues: N-(5'-phosphoribosyl)anthranilate isomerase (203 aa).

Belongs to the TrpF family.

It carries out the reaction N-(5-phospho-beta-D-ribosyl)anthranilate = 1-(2-carboxyphenylamino)-1-deoxy-D-ribulose 5-phosphate. It participates in amino-acid biosynthesis; L-tryptophan biosynthesis; L-tryptophan from chorismate: step 3/5. This is N-(5'-phosphoribosyl)anthranilate isomerase from Sulfurihydrogenibium sp. (strain YO3AOP1).